The sequence spans 572 residues: MRTSQYLLSTLKETPADAEVISHQLMLRAGMIRKLASGLYTWLPTGLRVLKKVENIVREEMNNAGAIEVSMPVVQPADLWQESGRWEQYGPELLRFVDRGERPFVLGPTHEEVITDLVRNELSSYKQLPLNFFQIQTKFRDEVRPRFGVMRSREFLMKDAYSFHTSQESLQETYDAMYAAYSRIFSRMGLDFRAVQADTGSIGGNASHEFQVLAQSGEDDIVFSDVSDYAANIELAEAIAPQTPRAAATQEMTLVDTPNAKTIAELVEQFNLPIEKTVKTLLVKAVKDSKSPLVALLVRGDHELNEVKAEKLPQVASPLTFATEEEIRAVINAGPGSLGPVNMPIPVIIDRTVAAMSDFAAGANIDGKHYFGINWDRDVATPVVADIRNVVAGDPSPDGQGTLLIKRGIEVGHIFQLGTKYSEALKASVQGEDGRNQILTMGCYGIGVTRVVAAAIEQNFDERGIVWPDAIAPFQVAILPMNMHKSFRVQELAEKLYSELRAQGIEVLMDDRKERPGVMFADMELIGIPHTIVIGDRNLDNDDIEYKYRRSGEKSLIKTGDIVDYLVKAIKG.

It belongs to the class-II aminoacyl-tRNA synthetase family. ProS type 1 subfamily. In terms of assembly, homodimer.

It localises to the cytoplasm. It catalyses the reaction tRNA(Pro) + L-proline + ATP = L-prolyl-tRNA(Pro) + AMP + diphosphate. Catalyzes the attachment of proline to tRNA(Pro) in a two-step reaction: proline is first activated by ATP to form Pro-AMP and then transferred to the acceptor end of tRNA(Pro). As ProRS can inadvertently accommodate and process non-cognate amino acids such as alanine and cysteine, to avoid such errors it has two additional distinct editing activities against alanine. One activity is designated as 'pretransfer' editing and involves the tRNA(Pro)-independent hydrolysis of activated Ala-AMP. The other activity is designated 'posttransfer' editing and involves deacylation of mischarged Ala-tRNA(Pro). The misacylated Cys-tRNA(Pro) is not edited by ProRS. This is Proline--tRNA ligase from Salmonella newport (strain SL254).